We begin with the raw amino-acid sequence, 865 residues long: Bifunctional uridylyltransferase/uridylyl-removing enzyme (865 aa).

Residues 1–318 (MPHVDLNPLK…FPRPDSDARL (318 aa)) form a uridylyltransferase region. The uridylyl-removing stretch occupies residues 319–675 (IDDDFRNLRE…VRPTEHGEGL (357 aa)). The HD domain occupies 437–559 (VDQHTLAVVR…VGDERRLAAL (123 aa)). ACT domains follow at residues 676–762 (QVMV…RLPH) and 789–865 (RLSV…QQAA). A disordered region spans residues 747–767 (DPHAARHAHAPRRLPHSHARR). Over residues 751-767 (ARHAHAPRRLPHSHARR) the composition is skewed to basic residues.

This sequence belongs to the GlnD family. It depends on Mg(2+) as a cofactor.

It carries out the reaction [protein-PII]-L-tyrosine + UTP = [protein-PII]-uridylyl-L-tyrosine + diphosphate. The enzyme catalyses [protein-PII]-uridylyl-L-tyrosine + H2O = [protein-PII]-L-tyrosine + UMP + H(+). With respect to regulation, uridylyltransferase (UTase) activity is inhibited by glutamine, while glutamine activates uridylyl-removing (UR) activity. In terms of biological role, modifies, by uridylylation and deuridylylation, the PII regulatory proteins (GlnB and homologs), in response to the nitrogen status of the cell that GlnD senses through the glutamine level. Under low glutamine levels, catalyzes the conversion of the PII proteins and UTP to PII-UMP and PPi, while under higher glutamine levels, GlnD hydrolyzes PII-UMP to PII and UMP (deuridylylation). Thus, controls uridylylation state and activity of the PII proteins, and plays an important role in the regulation of nitrogen assimilation and metabolism. This Bordetella pertussis (strain Tohama I / ATCC BAA-589 / NCTC 13251) protein is Bifunctional uridylyltransferase/uridylyl-removing enzyme.